Consider the following 285-residue polypeptide: Bifunctional protein FolD (285 aa).

NADP(+)-binding positions include 165–167 (GRS) and S190.

This sequence belongs to the tetrahydrofolate dehydrogenase/cyclohydrolase family. Homodimer.

The catalysed reaction is (6R)-5,10-methylene-5,6,7,8-tetrahydrofolate + NADP(+) = (6R)-5,10-methenyltetrahydrofolate + NADPH. It carries out the reaction (6R)-5,10-methenyltetrahydrofolate + H2O = (6R)-10-formyltetrahydrofolate + H(+). It participates in one-carbon metabolism; tetrahydrofolate interconversion. In terms of biological role, catalyzes the oxidation of 5,10-methylenetetrahydrofolate to 5,10-methenyltetrahydrofolate and then the hydrolysis of 5,10-methenyltetrahydrofolate to 10-formyltetrahydrofolate. This chain is Bifunctional protein FolD, found in Burkholderia thailandensis (strain ATCC 700388 / DSM 13276 / CCUG 48851 / CIP 106301 / E264).